A 508-amino-acid polypeptide reads, in one-letter code: Probable ligand-gated ion channel 46 (508 aa).

The signal sequence occupies residues 1–18; the sequence is MQYLQFLSLVVLLLMCHA. The Extracellular portion of the chain corresponds to 19 to 274; sequence RKSVYRRNSP…FEFKRRAGWY (256 aa). N-linked (GlcNAc...) asparagine glycans are attached at residues Asn65, Asn134, Asn175, and Asn201. A disulfide bond links Cys190 and Cys204. A helical transmembrane segment spans residues 275-295; sequence ILQAYLPTYLTICISWISFAL. At 296-301 the chain is on the cytoplasmic side; it reads GSKAIP. A helical membrane pass occupies residues 302–321; that stretch reads ARTMLGVNSLLAMTFQFGNI. Over 322-335 the chain is Extracellular; that stretch reads IRNLPRVSYVKAID. Residues 336–356 traverse the membrane as a helical segment; that stretch reads VWMLSCMTFVFCSLLELAWVG. The Cytoplasmic segment spans residues 357 to 480; the sequence is YLSREEEPTS…KQRREILAHK (124 aa). The disordered stretch occupies residues 374-407; the sequence is AQVAPKPCHPPPVQQNANNSSVHRRQKQPKNEEE. Residues 481–501 traverse the membrane as a helical segment; it reads IDSVSVFMFPFLFVLFNIAYW. Over 502-508 the chain is Extracellular; sequence QHYLRGY.

Belongs to the ligand-gated ion channel (TC 1.A.9) family. As to expression, expressed in the nervous system, with high expression in cholinergic motor neurons and weak expression in GABAergic motor neurons.

Its subcellular location is the presynaptic cell membrane. It localises to the cell projection. The protein localises to the axon. The protein resides in the cytoplasmic vesicle. It is found in the secretory vesicle. Its subcellular location is the synaptic vesicle. Its function is as follows. Probable component of a ligand-gated anion channel. Negatively regulates synaptic transmission and synaptic vesicle release in response to acetylcholine in cholinergic motor neurons. Role in synaptic vesicle release kinetics may be in association with the ligand-gated ion channel protein acc-4. The chain is Probable ligand-gated ion channel 46 from Caenorhabditis elegans.